The primary structure comprises 250 residues: Ribonuclease HII (250 aa).

The 185-residue stretch at 66-250 (QLVAGVDEVG…TFAPVSDFFK (185 aa)) folds into the RNase H type-2 domain. 3 residues coordinate a divalent metal cation: aspartate 72, glutamate 73, and aspartate 164.

It belongs to the RNase HII family. It depends on Mn(2+) as a cofactor. The cofactor is Mg(2+).

The protein resides in the cytoplasm. It catalyses the reaction Endonucleolytic cleavage to 5'-phosphomonoester.. Endonuclease that specifically degrades the RNA of RNA-DNA hybrids. The chain is Ribonuclease HII from Lactobacillus acidophilus (strain ATCC 700396 / NCK56 / N2 / NCFM).